The primary structure comprises 126 residues: Holo-[acyl-carrier-protein] synthase (126 aa).

Residues Asp9 and Glu58 each coordinate Mg(2+).

The protein belongs to the P-Pant transferase superfamily. AcpS family. Mg(2+) is required as a cofactor.

It localises to the cytoplasm. The catalysed reaction is apo-[ACP] + CoA = holo-[ACP] + adenosine 3',5'-bisphosphate + H(+). Transfers the 4'-phosphopantetheine moiety from coenzyme A to a Ser of acyl-carrier-protein. The chain is Holo-[acyl-carrier-protein] synthase from Enterobacter sp. (strain 638).